The primary structure comprises 244 residues: uncharacterized protein (244 aa).

This is an uncharacterized protein from Encephalitozoon cuniculi (strain GB-M1) (Microsporidian parasite).